Here is a 380-residue protein sequence, read N- to C-terminus: Cytochrome b (380 aa).

Transmembrane regions (helical) follow at residues 33–53 (LGSLLGTCLVLQIVTGLFLAM), 77–98 (WVIRYLHANGASMFFICLFLHI), 113–133 (WNIGIILLLATMATAFMGYVL), and 178–198 (FFTFHFILPFIITALVALHLL). Positions 83 and 97 each coordinate heme b. The heme b site is built by histidine 182 and histidine 196. Histidine 201 contributes to the a ubiquinone binding site. The next 4 membrane-spanning stretches (helical) occupy residues 226–246 (TKDILGLFLLLLTLMSLVLFS), 288–308 (LGGVLALLLSILILMTIPMLH), 320–340 (LSQLTYWLWAANLLTLTWIGG), and 347–367 (FITIGQVTSVLYFITILILVP).

It belongs to the cytochrome b family. In terms of assembly, the cytochrome bc1 complex contains 11 subunits: 3 respiratory subunits (MT-CYB, CYC1 and UQCRFS1), 2 core proteins (UQCRC1 and UQCRC2) and 6 low-molecular weight proteins (UQCRH/QCR6, UQCRB/QCR7, UQCRQ/QCR8, UQCR10/QCR9, UQCR11/QCR10 and a cleavage product of UQCRFS1). This cytochrome bc1 complex then forms a dimer. Requires heme b as cofactor.

The protein resides in the mitochondrion inner membrane. Its function is as follows. Component of the ubiquinol-cytochrome c reductase complex (complex III or cytochrome b-c1 complex) that is part of the mitochondrial respiratory chain. The b-c1 complex mediates electron transfer from ubiquinol to cytochrome c. Contributes to the generation of a proton gradient across the mitochondrial membrane that is then used for ATP synthesis. The chain is Cytochrome b (MT-CYB) from Nomascus leucogenys (Northern white-cheeked gibbon).